We begin with the raw amino-acid sequence, 160 residues long: 6,7-dimethyl-8-ribityllumazine synthase (160 aa).

5-amino-6-(D-ribitylamino)uracil contacts are provided by residues Trp-28, 59–61 (SFE), and 82–84 (VII). Residue 87-88 (GT) coordinates (2S)-2-hydroxy-3-oxobutyl phosphate. Residue His-90 is the Proton donor of the active site. Residue Phe-115 coordinates 5-amino-6-(D-ribitylamino)uracil. Arg-129 contributes to the (2S)-2-hydroxy-3-oxobutyl phosphate binding site.

Belongs to the DMRL synthase family.

It catalyses the reaction (2S)-2-hydroxy-3-oxobutyl phosphate + 5-amino-6-(D-ribitylamino)uracil = 6,7-dimethyl-8-(1-D-ribityl)lumazine + phosphate + 2 H2O + H(+). It functions in the pathway cofactor biosynthesis; riboflavin biosynthesis; riboflavin from 2-hydroxy-3-oxobutyl phosphate and 5-amino-6-(D-ribitylamino)uracil: step 1/2. Catalyzes the formation of 6,7-dimethyl-8-ribityllumazine by condensation of 5-amino-6-(D-ribitylamino)uracil with 3,4-dihydroxy-2-butanone 4-phosphate. This is the penultimate step in the biosynthesis of riboflavin. The sequence is that of 6,7-dimethyl-8-ribityllumazine synthase from Clavibacter michiganensis subsp. michiganensis (strain NCPPB 382).